A 583-amino-acid polypeptide reads, in one-letter code: MGLFTVTKKATTPFDGQKPGTSGLRKKVTVFQQPHYLQNFVQSTFNALPVDQVRGATIVVSGDGRYFSKDAVQIITKMAAANGVRRVWVGQNSLMSTPAVSAVIRERVGADGSKATGAFILTASHNPGGPKEDFGIKYNMGNGGPAPESVTDKIFSNTTTISEYLISEDLPDVDISVVGVTSFSGPEGPFDVDVFDSSVDYIKLMKTIFDFEAIKKLLTSPKFTFCYDALHGVAGAYAKHIFVEELGADESSLLNCVPKEDFGGGHPDPNLTYAKELVERMGLGKSSSNVEPPEFGAAADGDADRNMILGKRFFVTPSDSVAIIAANAVQSIPYFASGLKGVARSMPTSAALDVVAKNLNLKFFEVPTGWKFFGNLMDAGMCSICGEESFGTGSDHIREKDGIWAVLAWLSIIAFKNKDNLGGDKLVTVEDIVRQHWATYGRHYYTRYDYENVDAGAAKELMANLVSMQSSLSDVNKLVKEIRSDVSEVVAADEFEYKDPVDGSVSKHQGIRYLFGDGSRLVFRLSGTGSVGATIRVYIEQYERDSSKTGRDSQDALAPLVDVALKLSKMQEYTGRSAPTVIT.

Arg-25 and Ser-124 together coordinate alpha-D-glucose 1,6-bisphosphate. Ser-124 (phosphoserine intermediate) is an active-site residue. Ser-124, Asp-300, Asp-302, and Asp-304 together coordinate Mg(2+). Ser-124 bears the Phosphoserine mark. Alpha-D-glucose 1,6-bisphosphate is bound by residues Asp-304, Arg-305, Thr-368, Glu-387, Ser-389, and Lys-400.

It belongs to the phosphohexose mutase family. Monomer. Mg(2+) serves as cofactor. In terms of processing, autophosphorylated. In terms of tissue distribution, mostly expressed in roots and coleoptiles, and, to a lower extent, in leaves, pollen and developing seeds.

It is found in the cytoplasm. The catalysed reaction is alpha-D-glucose 1-phosphate = alpha-D-glucose 6-phosphate. The enzyme catalyses O-phospho-L-seryl-[protein] + alpha-D-glucose 1-phosphate = alpha-D-glucose 1,6-bisphosphate + L-seryl-[protein]. It carries out the reaction alpha-D-glucose 1,6-bisphosphate + L-seryl-[protein] = O-phospho-L-seryl-[protein] + alpha-D-glucose 6-phosphate. Catalyzes the reversible isomerization of alpha-D-glucose 1-phosphate to alpha-D-glucose 6-phosphate. The mechanism proceeds via the intermediate compound alpha-D-glucose 1,6-bisphosphate. This enzyme participates in both the breakdown and synthesis of glucose. This chain is Phosphoglucomutase, cytoplasmic 1, found in Zea mays (Maize).